Reading from the N-terminus, the 98-residue chain is Leydig cell tumor 10 kDa protein homolog (98 aa).

Disordered stretches follow at residues 1–38 and 73–98; these read MAQG…RVIA and SLPK…KMPA. Positions 16-25 are enriched in low complexity; it reads SKAAAAAASA. Over residues 28-38 the composition is skewed to basic residues; that stretch reads RGPRKGGRVIA. Residues 73 to 83 are compositionally biased toward low complexity; it reads SLPKKLALLKA.

The protein belongs to the UPF0390 family.

May have a potential role in hypercalcemia of malignancy. This chain is Leydig cell tumor 10 kDa protein homolog, found in Bos taurus (Bovine).